A 308-amino-acid polypeptide reads, in one-letter code: Taste receptor type 2 member 41 (308 aa).

Residues 1–7 (MLPTLSV) lie on the Extracellular side of the membrane. The chain crosses the membrane as a helical span at residues 8–28 (FFMLTFVLLCFLGILANGFIV). The Cytoplasmic portion of the chain corresponds to 29 to 60 (LMLSREWLLRGRLLPSDMILFSLGTSRFFQQC). The helical transmembrane segment at 61–81 (VGLVNSFYYFLHLVEYSGSLA) threads the bilayer. Residues 82–88 (RQLISLH) lie on the Extracellular side of the membrane. A helical membrane pass occupies residues 89 to 109 (WDFLNSATFWFCTWLSVLFCI). Residues 110 to 128 (KIANFSHPAFLWLKWRFPA) lie on the Cytoplasmic side of the membrane. The chain crosses the membrane as a helical span at residues 129–149 (LVPWFLLGSILVSVIVTLLFF). Residues 150-186 (WGNHTIYQAFLRRKFTGNTTFKEWNRRLEIDYFMPLK) are Extracellular-facing. 2 N-linked (GlcNAc...) asparagine glycosylation sites follow: N152 and N167. The chain crosses the membrane as a helical span at residues 187–207 (VVTMSIPCSLFLVSILLLISS). Topologically, residues 208-239 (LRRHSLRMQHNTHSLQDPNVQAHSRALKSLIS) are cytoplasmic. A helical transmembrane segment spans residues 240 to 260 (FLVLYAVSFVSMIIDATVFIS). The Extracellular portion of the chain corresponds to 261–264 (SDNV). Residues 265 to 285 (WYWPWQIILYFCMSVHPFILI) traverse the membrane as a helical segment. Residues 286 to 308 (TNNLRFRGTFRQLLLLARGFWVA) lie on the Cytoplasmic side of the membrane.

This sequence belongs to the G-protein coupled receptor T2R family. Expressed in subsets of taste receptor cells of the tongue and palate epithelium and exclusively in gustducin-positive cells.

It localises to the membrane. Functionally, receptor that may play a role in the perception of bitterness and is gustducin-linked. May play a role in sensing the chemical composition of the gastrointestinal content. The activity of this receptor may stimulate alpha gustducin, mediate PLC-beta-2 activation and lead to the gating of TRPM5. The polypeptide is Taste receptor type 2 member 41 (Tas2r41) (Mus musculus (Mouse)).